The chain runs to 180 residues: Cell division protein SepF (180 aa).

The tract at residues 21-40 is disordered; it reads LDDDYDDGRAVGRDDRRAMH. Basic and acidic residues predominate over residues 27 to 40; sequence DGRAVGRDDRRAMH.

The protein belongs to the SepF family. Homodimer. Interacts with FtsZ.

Its subcellular location is the cytoplasm. Cell division protein that is part of the divisome complex and is recruited early to the Z-ring. Probably stimulates Z-ring formation, perhaps through the cross-linking of FtsZ protofilaments. Its function overlaps with FtsA. This is Cell division protein SepF from Frankia casuarinae (strain DSM 45818 / CECT 9043 / HFP020203 / CcI3).